The sequence spans 286 residues: 33 kDa chaperonin (286 aa).

Cystine bridges form between cysteine 225/cysteine 227 and cysteine 258/cysteine 261.

This sequence belongs to the HSP33 family. In terms of processing, under oxidizing conditions two disulfide bonds are formed involving the reactive cysteines. Under reducing conditions zinc is bound to the reactive cysteines and the protein is inactive.

The protein resides in the cytoplasm. In terms of biological role, redox regulated molecular chaperone. Protects both thermally unfolding and oxidatively damaged proteins from irreversible aggregation. Plays an important role in the bacterial defense system toward oxidative stress. The chain is 33 kDa chaperonin from Shewanella sp. (strain MR-4).